Here is a 96-residue protein sequence, read N- to C-terminus: Citrate lyase acyl carrier protein (96 aa).

Ser14 carries the O-(phosphoribosyl dephospho-coenzyme A)serine modification.

The protein belongs to the CitD family. Oligomer with a subunit composition of (alpha,beta,gamma)6.

Its subcellular location is the cytoplasm. Covalent carrier of the coenzyme of citrate lyase. This is Citrate lyase acyl carrier protein from Pectobacterium atrosepticum (strain SCRI 1043 / ATCC BAA-672) (Erwinia carotovora subsp. atroseptica).